A 375-amino-acid polypeptide reads, in one-letter code: Myb family transcription factor PHL5 (375 aa).

The segment covering 159-171 (TSSQHQPKQSHPR) has biased composition (polar residues). Positions 159 to 178 (TSSQHQPKQSHPRFSSPPSF) are disordered. The HTH myb-type domain occupies 189-249 (CVNKTRIRWT…HLQKYRIAKY (61 aa)). Positions 220–245 (PKAILKRMDSDGLTIFHVKSHLQKYR) form a DNA-binding region, H-T-H motif. Residues 279–299 (KEALQLQLDVQRHLHEQLEIQ) adopt a coiled-coil conformation. An LHEQLE motif is present at residues 292-297 (LHEQLE).

Belongs to the MYB-CC family.

It is found in the nucleus. The sequence is that of Myb family transcription factor PHL5 from Arabidopsis thaliana (Mouse-ear cress).